A 472-amino-acid polypeptide reads, in one-letter code: Endoplasmic reticulum oxidoreductin-2 (472 aa).

An N-terminal signal peptide occupies residues 1 to 37; it reads MAETDVGSVKGKEKGSGKRWILLIGAIAAVLLAVVVA. A glycan (N-linked (GlcNAc...) asparagine) is linked at Asn44. Intrachain disulfides connect Cys55–Cys74, Cys57–Cys72, Cys111–Cys371, Cys120–Cys125, Cys221–Cys230, and Cys374–Cys377. Residues Arg200, Thr202, and Trp213 each contribute to the FAD site. Ser241 and His244 together coordinate FAD. An N-linked (GlcNAc...) asparagine glycan is attached at Asn267. The FAD site is built by Arg274 and Arg281. Asn364 carries N-linked (GlcNAc...) asparagine glycosylation.

It belongs to the EROs family. In terms of assembly, may function both as a monomer and a homodimer. FAD serves as cofactor. N-glycosylated.

The protein resides in the endoplasmic reticulum membrane. Its function is as follows. Essential oxidoreductase that oxidizes proteins in the endoplasmic reticulum to produce disulfide bonds. Acts by oxidizing directly PDI isomerase through a direct disulfide exchange. Does not act as a direct oxidant of folding substrate, but relies on PDI to transfer oxidizing equivalent. Does not oxidize all PDI related proteins, suggesting that it can discriminate between PDI and related proteins. Its reoxidation probably involves electron transfer to molecular oxygen via FAD. Acts independently of glutathione. May be responsible for a significant proportion of reactive oxygen species (ROS) in the cell, thereby being a source of oxidative stress. The sequence is that of Endoplasmic reticulum oxidoreductin-2 (AERO2) from Arabidopsis thaliana (Mouse-ear cress).